A 266-amino-acid chain; its full sequence is 4-hydroxy-tetrahydrodipicolinate reductase (266 aa).

Position 10 to 15 (G10 to M15) interacts with NAD(+). NADP(+) is bound at residue K38. NAD(+) contacts are provided by residues G99–T101 and A125–F128. Catalysis depends on H155, which acts as the Proton donor/acceptor. H156 provides a ligand contact to (S)-2,3,4,5-tetrahydrodipicolinate. K159 acts as the Proton donor in catalysis. Residue G165–T166 coordinates (S)-2,3,4,5-tetrahydrodipicolinate.

This sequence belongs to the DapB family.

It localises to the cytoplasm. The enzyme catalyses (S)-2,3,4,5-tetrahydrodipicolinate + NAD(+) + H2O = (2S,4S)-4-hydroxy-2,3,4,5-tetrahydrodipicolinate + NADH + H(+). The catalysed reaction is (S)-2,3,4,5-tetrahydrodipicolinate + NADP(+) + H2O = (2S,4S)-4-hydroxy-2,3,4,5-tetrahydrodipicolinate + NADPH + H(+). It functions in the pathway amino-acid biosynthesis; L-lysine biosynthesis via DAP pathway; (S)-tetrahydrodipicolinate from L-aspartate: step 4/4. Functionally, catalyzes the conversion of 4-hydroxy-tetrahydrodipicolinate (HTPA) to tetrahydrodipicolinate. The chain is 4-hydroxy-tetrahydrodipicolinate reductase from Bacillus cereus (strain ATCC 14579 / DSM 31 / CCUG 7414 / JCM 2152 / NBRC 15305 / NCIMB 9373 / NCTC 2599 / NRRL B-3711).